Reading from the N-terminus, the 179-residue chain is Casparian strip membrane protein 1 (179 aa).

Residues 1-17 lie on the Cytoplasmic side of the membrane; sequence MKAGPLQLGVVPPANRA. The helical transmembrane segment at 18-38 threads the bilayer; that stretch reads IAILDFFLRPIAIVGTLASAI. Topologically, residues 39–67 are extracellular; it reads AMATTNQTLPFFSQFIRFRAKFNDLPSFT. Asn44 is a glycosylation site (N-linked (GlcNAc...) asparagine). A helical membrane pass occupies residues 68 to 88; it reads FFVVASSIVSAYLILSLGFSI. Residues 89 to 100 lie on the Cytoplasmic side of the membrane; the sequence is LHIAKSNLVNSR. A helical membrane pass occupies residues 101–121; that stretch reads VLLLLLDTAAMGLLMAGSAAA. Topologically, residues 122–154 are extracellular; that stretch reads TAIVQLAHKGNNKVNWFAICQQYNSFCKRVSGS. Residues 155–175 form a helical membrane-spanning segment; sequence LIGSYAGVVVLILLILLSGVA. Residues 176-179 are Cytoplasmic-facing; sequence LSRR.

This sequence belongs to the Casparian strip membrane proteins (CASP) family. In terms of assembly, homodimer and heterodimers.

It is found in the cell membrane. Regulates membrane-cell wall junctions and localized cell wall deposition. Required for establishment of the Casparian strip membrane domain (CSD) and the subsequent formation of Casparian strips, a cell wall modification of the root endodermis that determines an apoplastic barrier between the intraorganismal apoplasm and the extraorganismal apoplasm and prevents lateral diffusion. The polypeptide is Casparian strip membrane protein 1 (Lactuca sativa (Garden lettuce)).